A 125-amino-acid polypeptide reads, in one-letter code: Phosphoribosyl-AMP cyclohydrolase (125 aa).

D86 contacts Mg(2+). C87 is a Zn(2+) binding site. D88 and D90 together coordinate Mg(2+). Positions 103 and 110 each coordinate Zn(2+).

Belongs to the PRA-CH family. As to quaternary structure, homodimer. Mg(2+) is required as a cofactor. Zn(2+) serves as cofactor.

It localises to the cytoplasm. It carries out the reaction 1-(5-phospho-beta-D-ribosyl)-5'-AMP + H2O = 1-(5-phospho-beta-D-ribosyl)-5-[(5-phospho-beta-D-ribosylamino)methylideneamino]imidazole-4-carboxamide. It participates in amino-acid biosynthesis; L-histidine biosynthesis; L-histidine from 5-phospho-alpha-D-ribose 1-diphosphate: step 3/9. In terms of biological role, catalyzes the hydrolysis of the adenine ring of phosphoribosyl-AMP. The polypeptide is Phosphoribosyl-AMP cyclohydrolase (Erythrobacter litoralis (strain HTCC2594)).